Consider the following 466-residue polypeptide: UDP-N-acetylmuramoylalanine--D-glutamate ligase (466 aa).

Position 128–134 (128–134) interacts with ATP; that stretch reads GTNGKST.

It belongs to the MurCDEF family.

It is found in the cytoplasm. It catalyses the reaction UDP-N-acetyl-alpha-D-muramoyl-L-alanine + D-glutamate + ATP = UDP-N-acetyl-alpha-D-muramoyl-L-alanyl-D-glutamate + ADP + phosphate + H(+). It functions in the pathway cell wall biogenesis; peptidoglycan biosynthesis. In terms of biological role, cell wall formation. Catalyzes the addition of glutamate to the nucleotide precursor UDP-N-acetylmuramoyl-L-alanine (UMA). The chain is UDP-N-acetylmuramoylalanine--D-glutamate ligase from Bartonella henselae (strain ATCC 49882 / DSM 28221 / CCUG 30454 / Houston 1) (Rochalimaea henselae).